Consider the following 507-residue polypeptide: Maturase K (507 aa).

This sequence belongs to the intron maturase 2 family. MatK subfamily.

The protein localises to the plastid. Its subcellular location is the chloroplast. In terms of biological role, usually encoded in the trnK tRNA gene intron. Probably assists in splicing its own and other chloroplast group II introns. This is Maturase K from Lyonia ferruginea (Rusty staggerbush).